The following is a 71-amino-acid chain: Large ribosomal subunit protein uL29 (71 aa).

It belongs to the universal ribosomal protein uL29 family.

This Methanococcus maripaludis (strain C7 / ATCC BAA-1331) protein is Large ribosomal subunit protein uL29.